The primary structure comprises 91 residues: Na(+)/H(+) antiporter subunit F (91 aa).

3 consecutive transmembrane segments (helical) span residues 5–27, 34–53, and 63–82; these read ILMIVLVVMSISLFVCFIRTLIG, IVALDTFGINLIGFIGVIMM, and VVLVISILAFIGSIALSKFI.

This sequence belongs to the CPA3 antiporters (TC 2.A.63) subunit F family. In terms of assembly, forms a heterooligomeric complex that consists of seven subunits: MrpA, MrpB, MrpC, MrpD, MrpE, MrpF and MrpG.

Its subcellular location is the cell membrane. Functionally, mnh complex is a Na(+)Li(+)/H(+) antiporter involved in Na(+) and/or Li(+) excretion and Na(+) resistance. Na(+)/H(+) antiport consumes a transmembrane electrical potential, and is thus inferred to be electrogenic. Does not transport K(+), Ca(2+) or Mg(2+). The polypeptide is Na(+)/H(+) antiporter subunit F (mrpF) (Alkalihalophilus pseudofirmus (strain ATCC BAA-2126 / JCM 17055 / OF4) (Bacillus pseudofirmus)).